The primary structure comprises 359 residues: UbiA prenyltransferase domain-containing protein 1 homolog (359 aa).

Positions 1-16 (MATSSQLLPNGNLSRN) are enriched in polar residues. Residues 1–23 (MATSSQLLPNGNLSRNGKTKTED) are disordered. A run of 8 helical transmembrane segments spans residues 67–89 (ALRP…LAYR), 98–118 (LATF…GNVV), 148–168 (VVSL…LLAV), 177–197 (LALI…GIGF), 200–220 (IALG…LFAF), 262–284 (IVTL…LLFA), 289–311 (FFIF…PQAF), and 335–355 (FFFG…PTFG).

It belongs to the UbiA prenyltransferase family.

It is found in the mitochondrion membrane. It participates in quinol/quinone metabolism; menaquinone biosynthesis. Functionally, prenyltransferase that mediates the formation of menaquinone-4 (MK-4), a vitamin K2 isoform, thereby acting as a mitochondrial electron carrier. Mediates the conversion of phylloquinone (PK) into MK-4, probably by cleaving the side chain of phylloquinone (PK) to release 2-methyl-1,4-naphthoquinone (menadione; K3) and then prenylating it with geranylgeranyl pyrophosphate (GGPP) to form MK-4. MK-4 acts as a membrane electron carrier downstream of a electron transport chain complex, improving mitochondrial oxygen consumption. The chain is UbiA prenyltransferase domain-containing protein 1 homolog (heix) from Drosophila melanogaster (Fruit fly).